The chain runs to 151 residues: MEISVFSIQKSSRDNFENEIQEYIKMSAKFAKINDKIIFNEKIARAQSSGRSDALRAYDEIYEPNLKGFCVMLDENGSQLDSQEFAQILNSNSQINFFIGGAYGLSQNLKDKAQKVVSLSKMTMAHKVAKLVLFEQIFRGLCINANHPYHK.

S-adenosyl-L-methionine contacts are provided by residues leucine 73, glycine 100, and 119-124 (LSKMTM).

The protein belongs to the RNA methyltransferase RlmH family. In terms of assembly, homodimer.

It is found in the cytoplasm. It carries out the reaction pseudouridine(1915) in 23S rRNA + S-adenosyl-L-methionine = N(3)-methylpseudouridine(1915) in 23S rRNA + S-adenosyl-L-homocysteine + H(+). Specifically methylates the pseudouridine at position 1915 (m3Psi1915) in 23S rRNA. This is Ribosomal RNA large subunit methyltransferase H from Campylobacter concisus (strain 13826).